A 100-amino-acid chain; its full sequence is NADH-quinone oxidoreductase subunit K (100 aa).

3 helical membrane passes run 4–24, 28–48, and 60–80; these read LQHG…GLLI, LLFM…AFVV, and VMYI…LALL.

Belongs to the complex I subunit 4L family. As to quaternary structure, NDH-1 is composed of 13 different subunits. Subunits NuoA, H, J, K, L, M, N constitute the membrane sector of the complex.

It is found in the cell inner membrane. The catalysed reaction is a quinone + NADH + 5 H(+)(in) = a quinol + NAD(+) + 4 H(+)(out). Its function is as follows. NDH-1 shuttles electrons from NADH, via FMN and iron-sulfur (Fe-S) centers, to quinones in the respiratory chain. The immediate electron acceptor for the enzyme in this species is believed to be ubiquinone. Couples the redox reaction to proton translocation (for every two electrons transferred, four hydrogen ions are translocated across the cytoplasmic membrane), and thus conserves the redox energy in a proton gradient. This Edwardsiella ictaluri (strain 93-146) protein is NADH-quinone oxidoreductase subunit K.